A 200-amino-acid chain; its full sequence is MASSLTCAGVIWALLSFLCAATSCVGFFMPYWLLGSQMGKPVSFGTFRRCSYPIRDEARGGTVMLEQCGRYASFQGIPSLEWRICTVVTGIGCGLLLLVALTAIMGCCVTDLISRTIGRVAGGIQFVGGLLIGSGCALYPLGWDSEEVRQTCSNSSDQFDLGSCEIGWAYYCTGAGAAAAMVLCTWMACFAGKKQKHYPY.

Residues 1-21 form the signal peptide; the sequence is MASSLTCAGVIWALLSFLCAA. The next 2 helical transmembrane spans lie at 84–104 and 123–143; these read ICTV…LTAI and GIQF…PLGW. N-linked (GlcNAc...) asparagine glycosylation occurs at Asn154. The helical transmembrane segment at 172–192 threads the bilayer; that stretch reads CTGAGAAAAMVLCTWMACFAG.

Belongs to the LHFP family.

Its subcellular location is the membrane. The chain is LHFPL tetraspan subfamily member 6 protein from Danio rerio (Zebrafish).